Here is a 251-residue protein sequence, read N- to C-terminus: Imidazole glycerol phosphate synthase subunit HisF (251 aa).

Active-site residues include D11 and D130.

This sequence belongs to the HisA/HisF family. As to quaternary structure, heterodimer of HisH and HisF.

The protein resides in the cytoplasm. It carries out the reaction 5-[(5-phospho-1-deoxy-D-ribulos-1-ylimino)methylamino]-1-(5-phospho-beta-D-ribosyl)imidazole-4-carboxamide + L-glutamine = D-erythro-1-(imidazol-4-yl)glycerol 3-phosphate + 5-amino-1-(5-phospho-beta-D-ribosyl)imidazole-4-carboxamide + L-glutamate + H(+). It participates in amino-acid biosynthesis; L-histidine biosynthesis; L-histidine from 5-phospho-alpha-D-ribose 1-diphosphate: step 5/9. Functionally, IGPS catalyzes the conversion of PRFAR and glutamine to IGP, AICAR and glutamate. The HisF subunit catalyzes the cyclization activity that produces IGP and AICAR from PRFAR using the ammonia provided by the HisH subunit. This is Imidazole glycerol phosphate synthase subunit HisF from Prosthecochloris aestuarii (strain DSM 271 / SK 413).